The following is an 810-amino-acid chain: Lon protease (810 aa).

The Lon N-terminal domain maps to 8 to 201 (LPLLPLRGIL…KLCGIVAKEL (194 aa)). 353-360 (GPPGVGKT) is an ATP binding site. The Lon proteolytic domain occupies 589-770 (NDEVGTVTGM…DQVLAIALLE (182 aa)). Catalysis depends on residues S676 and K719.

Belongs to the peptidase S16 family. In terms of assembly, homohexamer. Organized in a ring with a central cavity.

It localises to the cytoplasm. It catalyses the reaction Hydrolysis of proteins in presence of ATP.. Functionally, ATP-dependent serine protease that mediates the selective degradation of mutant and abnormal proteins as well as certain short-lived regulatory proteins. Required for cellular homeostasis and for survival from DNA damage and developmental changes induced by stress. Degrades polypeptides processively to yield small peptide fragments that are 5 to 10 amino acids long. Binds to DNA in a double-stranded, site-specific manner. The protein is Lon protease of Desulforamulus reducens (strain ATCC BAA-1160 / DSM 100696 / MI-1) (Desulfotomaculum reducens).